The sequence spans 20 residues: Thylakoid lumenal 14.7 kDa protein (20 aa).

The tract at residues 1–20 is disordered; sequence KTGVNKPELLPKEETTVIDV. The segment covering 9–20 has biased composition (basic and acidic residues); it reads LLPKEETTVIDV.

The protein localises to the plastid. It localises to the chloroplast thylakoid lumen. The chain is Thylakoid lumenal 14.7 kDa protein from Spinacia oleracea (Spinach).